Here is a 503-residue protein sequence, read N- to C-terminus: Hexose transporter 1 (503 aa).

The Cytoplasmic portion of the chain corresponds to 1 to 26; the sequence is MKKSSKEISPSQSLKNGGSDHFFNTS. Residues 27–47 traverse the membrane as a helical segment; it reads LMYVLAACLASFIFGYQVSVL. Residues 48 to 76 are Extracellular-facing; that stretch reads NTIKNFIVIEFGWCTGNKVECDDSTLKSS. Cysteines 61 and 68 form a disulfide. Residues 77–97 traverse the membrane as a helical segment; that stretch reads FLLASVFIGAVVGSGFSDYLV. Over 98–102 the chain is Cytoplasmic; it reads QHGRR. Residues 103–123 traverse the membrane as a helical segment; it reads FSLLVIYNFFILVSILTSITH. Residues 124–132 lie on the Extracellular side of the membrane; that stretch reads HFHTILFSR. A helical transmembrane segment spans residues 133–153; that stretch reads LLSGFGVGLITVSVPMYISEM. Over 154-163 the chain is Cytoplasmic; that stretch reads THKDKKGAYG. The helical transmembrane segment at 164 to 184 threads the bilayer; that stretch reads VLHQLFITFGILVAVLLGMAM. Residue Gln-167 coordinates alpha-D-glucose. Gln-167 is a beta-D-glucose binding site. The Extracellular segment spans residues 185–205; sequence GEAPDAKSVDALGEFQKIWWR. The chain crosses the membrane as a helical span at residues 206–226; sequence LMFFFPCLISILGIVLLTFFY. Residues 227-291 are Cytoplasmic-facing; it reads KEETPYYLFE…RAMQIPSYRN (65 aa). A helical transmembrane segment spans residues 292–312; that stretch reads VILLGCILSGLQQFTGINVLV. Alpha-D-glucose-binding residues include Gln-303, Gln-304, and Asn-309. Residue Gln-303 coordinates beta-D-glucose. Asn-309 is a binding site for beta-D-glucose. The Extracellular portion of the chain corresponds to 313–329; the sequence is SNSNELYKEFLSNKLIT. The chain crosses the membrane as a helical span at residues 330-350; sequence TLSVIMTVVNFLMTFPAIYIV. Residue Asn-339 coordinates beta-D-glucose. Residues 351-356 are Cytoplasmic-facing; the sequence is EKLGRK. A helical transmembrane segment spans residues 357–377; sequence TLLLCGCAGVTLAAFLPTAIA. The Extracellular portion of the chain corresponds to 378–391; it reads NQIDRSSDLVRNLS. A helical transmembrane segment spans residues 392-412; it reads IAATFVMIISFAVSYGPVLWI. Trp-411 is an alpha-D-glucose binding site. Topologically, residues 413 to 428 are cytoplasmic; sequence YLHEMFPSEIKDSAAS. Residues 429–449 form a helical membrane-spanning segment; that stretch reads LASLVNWVCAIIVVFPSDIII. The Extracellular portion of the chain corresponds to 450-454; sequence KKSPT. The chain crosses the membrane as a helical span at residues 455 to 475; sequence ILFFIFSGMSILSFLFIFFFI. The Cytoplasmic portion of the chain corresponds to 476-503; it reads KETKGGEIGTSPYITMEERQKHMGKSAV.

The protein belongs to the major facilitator superfamily. Sugar transporter (TC 2.A.1.1) family. In terms of assembly, homodimer.

The protein resides in the cell membrane. The enzyme catalyses D-glucose(out) = D-glucose(in). It catalyses the reaction D-fructose(out) = D-fructose(in). The catalysed reaction is D-galactose(in) = D-galactose(out). It carries out the reaction D-mannose(out) = D-mannose(in). The enzyme catalyses D-glucosamine(out) = D-glucosamine(in). It catalyses the reaction D-xylose(out) = D-xylose(in). With respect to regulation, inhibited by compound 3361 (3-O-((undec-10-en)-1-yl)-D-glucose). In terms of biological role, sodium-independent facilitative hexose transporter. Can transport D-glucose and D-fructose. Can transport D-mannose, D-galactose, D-xylose and D-glucosamine. In Plasmodium vivax, this protein is Hexose transporter 1.